Here is a 274-residue protein sequence, read N- to C-terminus: Aquaporin C (274 aa).

Over 1–33 (MPFLHLFTPYTNADNTKLILRVNESRLRLFTRQ) the chain is Cytoplasmic. Residues 34-54 (LLAEFFGTLFVVYIVSGSTLA) traverse the membrane as a helical segment. Residues 55–66 (ANFAVSDPIVRV) are Extracellular-facing. A helical membrane pass occupies residues 67–87 (CLICLVQGFAFAAIIWSISGI). The Cytoplasmic portion of the chain corresponds to 88–105 (SGCQLNPAVTVGCVTTGR). An NPA 1 motif is present at residues 93–95 (NPA). The chain crosses the membrane as a helical span at residues 106–126 (MGILNGIAFIIFQCVGALVGA). Residues 127-154 (GMMKASLPTFYERDLSATTLATGVNVAR) are Extracellular-facing. Residues 155 to 175 (GFFLEMVTTSFLVFVVLGVAV) form a helical membrane-spanning segment. Over 176–185 (YNEWDPKISR) the chain is Cytoplasmic. Residues 186–206 (VAPLAIGCAVIAGVGFLNLFT) form a helical membrane-spanning segment. Residues 207–229 (GGSLNPARSFGPAVFSDTWHRHY) lie on the Extracellular side of the membrane. Positions 211 to 213 (NPA) match the NPA 2 motif. The chain crosses the membrane as a helical span at residues 230-250 (IYWFGPICGGIIAGLFWRIFL). Residues 251-274 (SEKVLLIDRPYTDFHRSTYGTATK) are Cytoplasmic-facing.

This sequence belongs to the MIP/aquaporin (TC 1.A.8) family.

It is found in the cell membrane. Functionally, may form a water-specific channel. The sequence is that of Aquaporin C (wacA) from Dictyostelium discoideum (Social amoeba).